We begin with the raw amino-acid sequence, 593 residues long: ESX-1 secretion system protein EccCb1 (593 aa).

FtsK domains are found at residues Arg-66–Gln-260 and Gln-350–Asp-546. Residues Gly-85–Ser-92 and Gly-377–Thr-384 contribute to the ATP site.

Part of the ESX-1 / type VII secretion system (T7SS), which is composed of cytosolic and membrane components. The ESX-1 membrane complex is composed of EccB1, EccCa1, EccCb1, EccD1 and EccE1.

The protein resides in the cytoplasm. Its function is as follows. Part of the ESX-1 / type VII specialized secretion system (T7SS), which exports several proteins including EsxA and EsxB. Plays a role in DNA conjugation, in both donor and recipient strains. The protein is ESX-1 secretion system protein EccCb1 (eccCb1) of Mycolicibacterium smegmatis (strain MKD8) (Mycobacterium smegmatis).